Here is a 121-residue protein sequence, read N- to C-terminus: Inner membrane protein YhaH (121 aa).

At 1–23 (MDWYLKVLKNYVGFRGRARRKEY) the chain is on the periplasmic side. The chain crosses the membrane as a helical span at residues 24–44 (WMFILVNIIFTFVLGLLDKML). Over 45–49 (GWQRA) the chain is Cytoplasmic. The helical transmembrane segment at 50–70 (GGEGILTTIYGILVFLPWWAV) threads the bilayer. The Periplasmic segment spans residues 71–80 (QFRRLHDTDR). Residues 81–101 (SAWWALLFLIPFIGWLIIIVF) traverse the membrane as a helical segment. Topologically, residues 102 to 121 (NCQAGTPGENRFGPDPKLEP) are cytoplasmic.

The protein to E.coli YhaI.

Its subcellular location is the cell inner membrane. This Escherichia coli O157:H7 protein is Inner membrane protein YhaH (yhaH).